The chain runs to 539 residues: Gamma-2-syntrophin (539 aa).

The PDZ domain maps to threonine 73 to arginine 156. 2 stretches are compositionally biased toward low complexity: residues serine 168 to leucine 183 and serine 194 to proline 205. Positions serine 168–aspartate 209 are disordered. The PH domain occupies glutamine 296–phenylalanine 421.

It belongs to the syntrophin family. Interacts with the dystrophin protein DMD and related proteins DTNA and DTNB. Widely expressed. Strong expression in brain and testis. In CNS, it is expressed in the perikaryon and proximal portion of the neuronal processes. Strong expression in the hippocampus, neuron-rich dendate granule cells, and pyramidal cell layers. Highly expressed in neurons of the cerebral cortex. Also expressed in the cerebellar cortex, deep cerebellar nuclei, thalamus, and basal ganglia.

The protein resides in the cell membrane. Its subcellular location is the sarcolemma. It localises to the cytoplasm. It is found in the cytoskeleton. In terms of biological role, adapter protein that binds to and probably organizes the subcellular localization of a variety of proteins. May link various receptors to the actin cytoskeleton and the dystrophin glycoprotein complex. In Homo sapiens (Human), this protein is Gamma-2-syntrophin (SNTG2).